A 380-amino-acid chain; its full sequence is Probable polyglutamine synthesis accessory protein MT0602 (380 aa).

Belongs to the CapA family.

Could be involved in the biosynthesis, transport or localization of poly-alpha-L-glutamine (PLG), a cell wall component. Contributes to stress tolerance and virulence. The polypeptide is Probable polyglutamine synthesis accessory protein MT0602 (Mycobacterium tuberculosis (strain CDC 1551 / Oshkosh)).